Consider the following 606-residue polypeptide: Serine/threonine-protein kinase A-Raf (606 aa).

The 73-residue stretch at 19-91 (GTVKVYLPNK…DGEELIVEVL (73 aa)) folds into the RBD domain. Residues 98–144 (MHNFVRKTFFSLAFCDFCLKFLFHGFRCQTCGYKFHQHCSSKVPTVC) form a Phorbol-ester/DAG-type zinc finger. Zn(2+)-binding residues include histidine 99, cysteine 112, cysteine 115, cysteine 125, cysteine 128, histidine 133, cysteine 136, and cysteine 144. Serine 157 and serine 162 each carry phosphoserine. Positions 160 to 207 (DLSGGSRQHEAPSNRPLNELLTPQGPSPRTQHCDPEHFPFPAPANAPL) are disordered. The residue at position 181 (threonine 181) is a Phosphothreonine. Phosphoserine occurs at positions 186 and 214. The disordered stretch occupies residues 240 to 290 (STDAAGSRGGSDGTPRGSPSPASVSSGRKSPHSKSPAEQRERKSLADDKKK). Residue threonine 253 is modified to Phosphothreonine. A phosphoserine mark is found at serine 257 and serine 269. Basic and acidic residues predominate over residues 274-289 (SPAEQRERKSLADDKK). The Protein kinase domain occupies 310-570 (VQLLKRIGTG…PQILATIELL (261 aa)). Residues 316-324 (IGTGSFGTV) and lysine 336 contribute to the ATP site. Threonine 318 is subject to Phosphothreonine. Aspartate 429 serves as the catalytic Proton acceptor.

This sequence belongs to the protein kinase superfamily. TKL Ser/Thr protein kinase family. RAF subfamily. Interacts with TH1L/NELFD. It depends on Zn(2+) as a cofactor. Dephosphorylation of Ser-214 by the SHOC2-MRAS-PP1c (SMP) complex consisting of SHOC2, GTP-bound M-Ras/MRAS and the catalytic subunit of protein phosphatase 1 (PPP1CA, PPP1CB or PPP1CC); this relieves inactivation and stimulates kinase activity. Predominantly in urogenital tissues.

It carries out the reaction L-seryl-[protein] + ATP = O-phospho-L-seryl-[protein] + ADP + H(+). The enzyme catalyses L-threonyl-[protein] + ATP = O-phospho-L-threonyl-[protein] + ADP + H(+). In terms of biological role, involved in the transduction of mitogenic signals from the cell membrane to the nucleus. May also regulate the TOR signaling cascade. Phosphorylates PFKFB2. Functionally, serves as a positive regulator of myogenic differentiation by inducing cell cycle arrest, the expression of myogenin and other muscle-specific proteins, and myotube formation. The protein is Serine/threonine-protein kinase A-Raf (ARAF) of Homo sapiens (Human).